The primary structure comprises 265 residues: ETS-related transcription factor Elf-5 (265 aa).

Positions 43–129 (YPAFEHQTAC…FILQNIRTQG (87 aa)) constitute a PNT domain. Positions 173–254 (SHLWEFVRDL…VDRRLVYKFG (82 aa)) form a DNA-binding region, ETS.

Belongs to the ETS family. As to expression, expressed exclusively in tissues with a high content of epithelial cells. Highly expressed in salivary gland, mammary gland, kidney and prostate. Weakly expressed in placenta and lung. Isoform 1 and isoform 2 are differentially expressed in different tissues. In the kidney, only isoform 1 was expressed, while prostate expressed both isoforms, with levels of isoform 2 being higher. Expression is up-regulated during keratinocyte differentiation. Several epithelial carcinoma cell lines showed lack of expression.

The protein resides in the nucleus. Transcriptionally activator that may play a role in regulating the later stages of keratinocytes terminal differentiation. In terms of biological role, isoform 2 binds to DNA sequences containing the consensus nucleotide core sequence GGA[AT]. Transcriptionally activates SPRR2A and the parotid gland-specific PSP promoters. In Homo sapiens (Human), this protein is ETS-related transcription factor Elf-5 (ELF5).